Reading from the N-terminus, the 509-residue chain is Dihydrolipoyl dehydrogenase, mitochondrial (509 aa).

Residues 1–35 constitute a mitochondrion transit peptide; that stretch reads MQSWSRVYCSLAKRGHFNRISHGLQGLSAVPLRTY. K66 bears the N6-acetyllysine; alternate mark. K66 carries the post-translational modification N6-succinyllysine; alternate. FAD contacts are provided by residues 71 to 80 and K89; that span reads EKNETLGGTC. Residues C80 and C85 are joined by a disulfide bond. N6-acetyllysine; alternate is present on residues K104, K122, K132, and K143. K104, K122, K132, and K143 each carry N6-succinyllysine; alternate. G154 contributes to the FAD binding site. N6-succinyllysine is present on residues K159 and K166. 183–185 contacts FAD; that stretch reads TGS. NAD(+)-binding positions include 220-227 and E243; that span reads GAGVIGVE. N6-succinyllysine is present on residues K273 and K277. Residue V278 coordinates NAD(+). Phosphoserine is present on residues S285 and S297. Position 314 (G314) interacts with NAD(+). The residue at position 346 (K346) is an N6-acetyllysine. FAD-binding positions include D355 and 361-364; that span reads MLAH. Position 410 is an N6-acetyllysine; alternate (K410). K410 carries the post-translational modification N6-succinyllysine; alternate. N6-acetyllysine is present on residues K417 and K420. At K430 the chain carries N6-succinyllysine. H487 acts as the Proton acceptor in catalysis. S502 carries the phosphoserine modification. K505 is modified (N6-acetyllysine; alternate). At K505 the chain carries N6-succinyllysine; alternate.

It belongs to the class-I pyridine nucleotide-disulfide oxidoreductase family. Homodimer. Part of the multimeric pyruvate dehydrogenase complex that contains multiple copies of pyruvate dehydrogenase (subunits PDHA (PDHA1 or PDHA2) and PDHB, E1), dihydrolipoamide acetyltransferase (DLAT, E2) and lipoamide dehydrogenase (DLD, E3). These subunits are bound to an inner core composed of about 48 DLAT and 12 PDHX molecules (by non covalent bonds). The 2-oxoglutarate dehydrogenase complex is composed of OGDH (2-oxoglutarate dehydrogenase; E1), DLST (dihydrolipoamide succinyltransferase; E2), DLD (dihydrolipoamide dehydrogenase; E3) and the assembly factor KGD4. It contains multiple copies of the three enzymatic components (E1, E2 and E3). In the nucleus, the 2-oxoglutarate dehydrogenase complex associates with KAT2A. Interacts with PDHX. Requires FAD as cofactor. Tyrosine phosphorylated.

The protein resides in the mitochondrion matrix. It is found in the nucleus. The protein localises to the cell projection. Its subcellular location is the cilium. It localises to the flagellum. The protein resides in the cytoplasmic vesicle. It is found in the secretory vesicle. The protein localises to the acrosome. The catalysed reaction is N(6)-[(R)-dihydrolipoyl]-L-lysyl-[protein] + NAD(+) = N(6)-[(R)-lipoyl]-L-lysyl-[protein] + NADH + H(+). Functionally, lipoamide dehydrogenase is a component of the glycine cleavage system as well as an E3 component of three alpha-ketoacid dehydrogenase complexes (pyruvate-, alpha-ketoglutarate-, and branched-chain amino acid-dehydrogenase complex). The 2-oxoglutarate dehydrogenase complex is mainly active in the mitochondrion. A fraction of the 2-oxoglutarate dehydrogenase complex also localizes in the nucleus and is required for lysine succinylation of histones: associates with KAT2A on chromatin and provides succinyl-CoA to histone succinyltransferase KAT2A. In monomeric form may have additional moonlighting function as serine protease. Involved in the hyperactivation of spermatazoa during capacitation and in the spermatazoal acrosome reaction. The protein is Dihydrolipoyl dehydrogenase, mitochondrial (DLD) of Macaca fascicularis (Crab-eating macaque).